Reading from the N-terminus, the 313-residue chain is Phenylalanine-4-hydroxylase (313 aa).

Fe cation is bound by residues His154, His159, and Glu200.

Belongs to the biopterin-dependent aromatic amino acid hydroxylase family. Requires Fe(2+) as cofactor.

It carries out the reaction (6R)-L-erythro-5,6,7,8-tetrahydrobiopterin + L-phenylalanine + O2 = (4aS,6R)-4a-hydroxy-L-erythro-5,6,7,8-tetrahydrobiopterin + L-tyrosine. The protein operates within amino-acid degradation; L-phenylalanine degradation; acetoacetate and fumarate from L-phenylalanine: step 1/6. This chain is Phenylalanine-4-hydroxylase (phhA), found in Ralstonia nicotianae (strain ATCC BAA-1114 / GMI1000) (Ralstonia solanacearum).